A 204-amino-acid polypeptide reads, in one-letter code: Protein GrpE (204 aa).

Residues 1 to 55 (MSSKNNPESETKAKNKWEKVMEAEEEQEEGRGDGSQEMEPHREGLEFPSREKLEG) form a disordered region. Composition is skewed to basic and acidic residues over residues 7 to 22 (PESETKAKNKWEKVME) and 29 to 55 (EGRGDGSQEMEPHREGLEFPSREKLEG).

It belongs to the GrpE family. As to quaternary structure, homodimer.

Its subcellular location is the cytoplasm. Its function is as follows. Participates actively in the response to hyperosmotic and heat shock by preventing the aggregation of stress-denatured proteins, in association with DnaK and GrpE. It is the nucleotide exchange factor for DnaK and may function as a thermosensor. Unfolded proteins bind initially to DnaJ; upon interaction with the DnaJ-bound protein, DnaK hydrolyzes its bound ATP, resulting in the formation of a stable complex. GrpE releases ADP from DnaK; ATP binding to DnaK triggers the release of the substrate protein, thus completing the reaction cycle. Several rounds of ATP-dependent interactions between DnaJ, DnaK and GrpE are required for fully efficient folding. The protein is Protein GrpE of Coxiella burnetii (strain RSA 331 / Henzerling II).